A 443-amino-acid polypeptide reads, in one-letter code: Threonine/serine transporter TdcC (443 aa).

The next 11 membrane-spanning stretches (helical) occupy residues 22 to 42, 44 to 64, 97 to 117, 140 to 160, 163 to 183, 207 to 227, 259 to 279, 319 to 339, 366 to 386, 389 to 409, and 423 to 443; these read TTWT…FFPI, AGFG…PIAF, GVVI…IYGV, FVAL…KDLM, VMSY…LSLI, ILVT…FSPI, ASML…FTLS, ASII…LGTL, ISMI…PNIL, IEAM…MYAI, and DNVF…YKLF.

Belongs to the amino acid/polyamine transporter 2 family. SdaC/TdcC subfamily.

Its subcellular location is the cell inner membrane. It carries out the reaction L-threonine(in) + H(+)(in) = L-threonine(out) + H(+)(out). The enzyme catalyses L-serine(in) + H(+)(in) = L-serine(out) + H(+)(out). Its function is as follows. Involved in the import of threonine and serine into the cell, with the concomitant import of a proton (symport system). The polypeptide is Threonine/serine transporter TdcC (Salmonella paratyphi B (strain ATCC BAA-1250 / SPB7)).